Reading from the N-terminus, the 574-residue chain is Sulfate adenylyltransferase (574 aa).

An N-terminal region spans residues 1 to 170 (MANPPHGGVL…VEAIDRLEHY (170 aa)). The interval 171–395 (DYVGLRYTPA…LRESHPPRNQ (225 aa)) is catalytic. Q198 is a sulfate binding site. ATP contacts are provided by residues 198–201 (QTRN) and 292–295 (GRDH). Residues T199, R200, and N201 contribute to the active site. R200 lines the sulfate pocket. A296 serves as a coordination point for sulfate. M334 is an ATP binding site. An allosteric regulation domain; adenylyl-sulfate kinase-like region spans residues 396–574 (QGFTVFLTGY…LESQGLLTQL (179 aa)). Residues 435-438 (ETVR), R452, 478-479 (IA), and R516 contribute to the 3'-phosphoadenylyl sulfate site.

It in the N-terminal section; belongs to the sulfate adenylyltransferase family. This sequence in the C-terminal section; belongs to the APS kinase family. In terms of assembly, homohexamer. Dimer of trimers.

It localises to the cytoplasm. It catalyses the reaction sulfate + ATP + H(+) = adenosine 5'-phosphosulfate + diphosphate. Its pathway is sulfur metabolism; hydrogen sulfide biosynthesis; sulfite from sulfate: step 1/3. Allosterically inhibited by 3'-phosphoadenosine 5'-phosphosulfate (PAPS). Its function is as follows. Catalyzes the first intracellular reaction of sulfate assimilation, forming adenosine-5'-phosphosulfate (APS) from inorganic sulfate and ATP. Plays an important role in sulfate activation as a component of the biosynthesis pathway of sulfur-containing amino acids. This Phaeosphaeria nodorum (strain SN15 / ATCC MYA-4574 / FGSC 10173) (Glume blotch fungus) protein is Sulfate adenylyltransferase.